Consider the following 170-residue polypeptide: MKTQRDSPSLGRWSLVLLLLGLVMPLAIVAQVLSYQEAVLRAIDGINQRSSDANLYRLLDLDPRPTMDGDPDTPKPVSFTVKETVCPRTTQKSPEDCDFKEDGLVKRCVGTVILNQARDSFDISCDKDNRRFARLGNFFRKVKEKIGGGLKKVGQKIKDFLGNLVPRTAS.

The signal sequence occupies residues 1-30 (MKTQRDSPSLGRWSLVLLLLGLVMPLAIVA). A propeptide spans 31–131 (QVLSYQEAVL…DISCDKDNRR (101 aa)) (cathelin-like domain (CLD)). 2 disulfides stabilise this stretch: cysteine 86-cysteine 97 and cysteine 108-cysteine 125. Residues 150-162 (LKKVGQKIKDFLG) form an active core region.

Belongs to the cathelicidin family. As to quaternary structure, monomer, homodimer or homotrimer (in vitro). Oligomerizes as tetra- or hexamer in solution (in vitro). Post-translationally, proteolytically cleaved by proteinase PRTN3 into antibacterial peptide LL-37. Proteolytically cleaved by cathepsin CTSG and neutrophil elastase ELANE. Resistant to proteolytic degradation in solution, and when bound to both zwitterionic (mimicking mammalian membranes) and negatively charged membranes (mimicking bacterial membranes). In terms of processing, after secretion onto the skin surface, the CAMP gene product is processed by a serine protease-dependent mechanism into multiple novel antimicrobial peptides distinct from and shorter than cathelicidin LL-37. These peptides show enhanced antimicrobial action, acquiring the ability to kill skin pathogens such as S.aureus, E.coli and C.albicans. These peptides have lost the ability to stimulate CXCL8/IL8 release from keratinocytes. The peptides act synergistically, killing bacteria at lower concentrations when present together, and maintain activity at increased salt condition.

It is found in the secreted. The protein localises to the vesicle. Functionally, antimicrobial protein that is an integral component of the innate immune system. Binds to bacterial lipopolysaccharides (LPS). Acts via neutrophil N-formyl peptide receptors to enhance the release of CXCL2. Postsecretory processing generates multiple cathelicidin antimicrobial peptides with various lengths which act as a topical antimicrobial defense in sweat on skin. The unprocessed precursor form, cathelicidin antimicrobial peptide, inhibits the growth of Gram-negative E.coli and E.aerogenes with efficiencies comparable to that of the mature peptide LL-37 (in vitro). Antimicrobial peptide that is an integral component of the innate immune system. Binds to bacterial lipopolysaccharides (LPS). Causes membrane permeabilization by forming transmembrane pores (in vitro). Causes lysis of E.coli. Exhibits antimicrobial activity against Gram-negative bacteria such as P.aeruginosa, S.typhimurium, E.aerogenes, E.coli and P.syringae, Gram-positive bacteria such as L.monocytogenes, S.epidermidis, S.pyogenes and S.aureus, as well as vancomycin-resistant enterococci (in vitro). Exhibits antimicrobial activity against methicillin-resistant S.aureus, P.mirabilis, and C.albicans in low-salt media, but not in media containing 100 mM NaCl (in vitro). Forms chiral supramolecular assemblies with quinolone signal (PQS) molecules of P.aeruginosa, which may lead to interference of bacterial quorum signaling and perturbance of bacterial biofilm formation. May form supramolecular fiber-like assemblies on bacterial membranes. Induces cytokine and chemokine producation as well as TNF/TNFA and CSF2/GMCSF production in normal human keratinocytes. Exhibits hemolytic activity against red blood cells. Its function is as follows. Exhibits antimicrobial activity against E.coli and B.megaterium (in vitro). The protein is Cathelicidin antimicrobial peptide of Papio papio (Guinea baboon).